Reading from the N-terminus, the 204-residue chain is Ribonuclease HII (204 aa).

An RNase H type-2 domain is found at Gly13 to Ser204. Positions 19, 20, and 113 each coordinate a divalent metal cation.

It belongs to the RNase HII family. Requires Mn(2+) as cofactor. It depends on Mg(2+) as a cofactor.

It localises to the cytoplasm. It carries out the reaction Endonucleolytic cleavage to 5'-phosphomonoester.. Its function is as follows. Endonuclease that specifically degrades the RNA of RNA-DNA hybrids. This is Ribonuclease HII from Cutibacterium acnes (strain DSM 16379 / KPA171202) (Propionibacterium acnes).